The sequence spans 290 residues: Probable aquaporin PIP2-1 (290 aa).

2 consecutive transmembrane segments (helical) span residues 43–63 (AVIA…ATVI) and 80–100 (CGGV…FILV). The NPA 1 motif lies at 112-114 (NPA). 3 helical membrane-spanning segments follow: residues 131-151 (ILYI…VKAF), 173-193 (GTGL…VFSA), and 207-227 (VLAP…TIPI). Positions 233 to 235 (NPA) match the NPA 2 motif. The chain crosses the membrane as a helical span at residues 255 to 275 (IFWVGPFVGAAIAAFYHQYIL).

Belongs to the MIP/aquaporin (TC 1.A.8) family. PIP (TC 1.A.8.11) subfamily. In terms of tissue distribution, expressed in roots, leaves and anthers.

It localises to the cell membrane. In terms of biological role, aquaporins facilitate the transport of water and small neutral solutes across cell membranes. The sequence is that of Probable aquaporin PIP2-1 (PIP2-1) from Oryza sativa subsp. japonica (Rice).